The sequence spans 301 residues: Ribosomal protein L11 methyltransferase (301 aa).

Threonine 147, glycine 168, aspartate 190, and asparagine 237 together coordinate S-adenosyl-L-methionine.

The protein belongs to the methyltransferase superfamily. PrmA family.

Its subcellular location is the cytoplasm. It carries out the reaction L-lysyl-[protein] + 3 S-adenosyl-L-methionine = N(6),N(6),N(6)-trimethyl-L-lysyl-[protein] + 3 S-adenosyl-L-homocysteine + 3 H(+). In terms of biological role, methylates ribosomal protein L11. This chain is Ribosomal protein L11 methyltransferase, found in Synechococcus sp. (strain RCC307).